We begin with the raw amino-acid sequence, 513 residues long: Membrane protein (513 aa).

4 repeat units span residues 9 to 11 (PSA), 12 to 14 (PSA), 15 to 17 (PSA), and 18 to 20 (PSA). The interval 9–20 (PSAPSAPSAPSA) is 4 X 3 AA tandem repeats of P-S-A. The next 14 membrane-spanning stretches (helical) occupy residues 32–52 (LTLH…LAIP), 56–76 (GLTV…VVWI), 79–99 (AVSY…LIGF), 126–146 (TALA…VTGL), 165–185 (ILIG…SATA), 208–228 (NIAA…NVGI), 254–274 (QWLI…YFLV), 309–329 (LAAV…LHSF), 332–352 (ATVT…VMDW), 360–380 (PWGT…LLST), 400–420 (GALL…LGFA), 422–442 (ATAL…TLPG), 447–467 (VGMT…PINA), and 487–507 (IGIP…ATYW).

It belongs to the SLC13A/DASS transporter (TC 2.A.47) family. DIT1 subfamily.

The protein localises to the cell membrane. The protein is Membrane protein of Cupriavidus necator (strain ATCC 17699 / DSM 428 / KCTC 22496 / NCIMB 10442 / H16 / Stanier 337) (Ralstonia eutropha).